The following is a 348-amino-acid chain: Rhodopsin (348 aa).

Met-1 is subject to N-acetylmethionine. Topologically, residues 1 to 36 are extracellular; that stretch reads MNGTEGPNFYVPYSNKSGVVRSPYEEPQYYLAEPWM. N-linked (GlcNAc...) asparagine glycosylation is found at Asn-2 and Asn-15. Residues 37-61 traverse the membrane as a helical segment; the sequence is FSCLAAYMFMLIVLGFPINFLTLYV. Residues 62–73 are Cytoplasmic-facing; the sequence is TIQHKKLRTPLN. A helical transmembrane segment spans residues 74 to 96; the sequence is YILLNLAVADLFMVICGFTTTLV. The Extracellular segment spans residues 97-110; it reads TSLNGYFVFGTTGC. A disulfide bridge links Cys-110 with Cys-187. Residues 111-133 form a helical membrane-spanning segment; that stretch reads LVEGFFATTGGEVALWALVVLAI. Residues 134–136 carry the 'Ionic lock' involved in activated form stabilization motif; that stretch reads ERY. Residues 134-152 are Cytoplasmic-facing; that stretch reads ERYIVVCKPMSNFRFGENH. The chain crosses the membrane as a helical span at residues 153–173; it reads AIMGVAFTWIMALACSVPPIF. Over 174–202 the chain is Extracellular; it reads GWSRYIPEGMQCSCGIDYYTLNPEFNNES. Glu-201 lines the Zn(2+) pocket. Residues 203 to 224 form a helical membrane-spanning segment; that stretch reads FVIYMFVVHFIIPLTVIFFCYG. At 225–252 the chain is on the cytoplasmic side; it reads QLVFTVKEAAAQQQESATTQKAEKEVTR. A helical membrane pass occupies residues 253–274; sequence MVIIMVIAFLICWVPYASVAFY. Residues 275–286 lie on the Extracellular side of the membrane; it reads IFTHQGSDFGPI. Residue Gln-279 participates in Zn(2+) binding. A helical transmembrane segment spans residues 287 to 308; that stretch reads FMTLPAFFAKSSSIYNPVIYIM. The residue at position 296 (Lys-296) is an N6-(retinylidene)lysine. Residues 309–348 are Cytoplasmic-facing; it reads MNKQFRNCMITTLCCGKNPLGDDEASTTASKTETSQVAPA. Residues Cys-322 and Cys-323 are each lipidated (S-palmitoyl cysteine). The segment at 330–348 is interaction with SAG; sequence DDEASTTASKTETSQVAPA. At Ser-334 the chain carries Phosphoserine. A phosphothreonine mark is found at Thr-335 and Thr-336. Residue Ser-338 is modified to Phosphoserine. Phosphothreonine is present on residues Thr-340 and Thr-342. Ser-343 bears the Phosphoserine mark.

The protein belongs to the G-protein coupled receptor 1 family. Opsin subfamily. As to quaternary structure, homodimer. May form a complex composed of RHO, GRK1 and RCVRN in a Ca(2+)-dependent manner; RCVRN prevents the interaction between GRK1 and RHO. Interacts with GRK1. Interacts (phosphorylated form) with SAG. Interacts with GNAT1. Interacts with GNAT3. SAG and G-proteins compete for a common binding site. Interacts with PRCD; the interaction promotes PRCD stability. Forms a complex with ASAP1 and ARF4. Forms a complex with ASAP1, RAB11A, Rabin8/RAB3IP, ARF4 and RAB11FIP3; the complex regulates Golgi-to-cilia rhodopsin/RHO transport in photoreceptors. In terms of processing, phosphorylated on some or all of the serine and threonine residues present in the C-terminal region. Post-translationally, contains one covalently linked retinal chromophore. Upon light absorption, the covalently bound 11-cis-retinal is converted to all-trans-retinal. After hydrolysis of the Schiff base and release of the covalently bound all-trans-retinal, active rhodopsin is regenerated by binding of a fresh molecule of 11-cis-retinal.

The protein localises to the membrane. It localises to the cell projection. Its subcellular location is the cilium. The protein resides in the photoreceptor outer segment. In terms of biological role, photoreceptor required for image-forming vision at low light intensity. Required for photoreceptor cell viability after birth. Light-induced isomerization of 11-cis to all-trans retinal triggers a conformational change that activates signaling via G-proteins. Subsequent receptor phosphorylation mediates displacement of the bound G-protein alpha subunit by the arrestin SAG and terminates signaling. The protein is Rhodopsin (RHO) of Sminthopsis crassicaudata (Fat-tailed dunnart).